We begin with the raw amino-acid sequence, 132 residues long: D-beta-hydroxybutyrate dehydrogenase, mitochondrial (132 aa).

3-27 serves as a coordination point for NAD(+); sequence LVTGCDSGFGFSLAKHLHSKGFLVF. Position 17 is an N6-acetyllysine (Lys-17). Ser-59 is a binding site for substrate. Catalysis depends on Tyr-66, which acts as the Proton acceptor. Residue Lys-70 is modified to N6-acetyllysine. Ser-77 carries an O-linked (GlcNAc) serine glycan. Ser-104 carries the post-translational modification Phosphoserine.

Belongs to the short-chain dehydrogenases/reductases (SDR) family. Homotetramer.

The protein localises to the mitochondrion inner membrane. It is found in the mitochondrion matrix. It catalyses the reaction (R)-3-hydroxybutanoate + NAD(+) = acetoacetate + NADH + H(+). Requires phosphatidylcholine as an allosteric activator for enzymatic activity. This chain is D-beta-hydroxybutyrate dehydrogenase, mitochondrial, found in Mesocricetus auratus (Golden hamster).